Reading from the N-terminus, the 453-residue chain is Trigger factor (453 aa).

The 86-residue stretch at 171–256 folds into the PPIase FKBP-type domain; sequence GDRVTISFKG…ASLIEAPQDI (86 aa).

This sequence belongs to the FKBP-type PPIase family. Tig subfamily.

The protein resides in the cytoplasm. It carries out the reaction [protein]-peptidylproline (omega=180) = [protein]-peptidylproline (omega=0). Its function is as follows. Involved in protein export. Acts as a chaperone by maintaining the newly synthesized protein in an open conformation. Functions as a peptidyl-prolyl cis-trans isomerase. The sequence is that of Trigger factor from Nitrobacter hamburgensis (strain DSM 10229 / NCIMB 13809 / X14).